The chain runs to 300 residues: Bidirectional sugar transporter SWEET12 (300 aa).

The Extracellular segment spans residues 1–4; the sequence is MVQA. The chain crosses the membrane as a helical span at residues 5-25; the sequence is LVFAVGIVGNILSFLVILAPV. Positions 8–92 constitute a MtN3/slv 1 domain; that stretch reads AVGIVGNILS…TVYLLYAPRQ (85 aa). The Cytoplasmic portion of the chain corresponds to 26-38; the sequence is PTFYRVYKKKSTE. A helical transmembrane segment spans residues 39–61; sequence SFQSVPYAVALLSAMLWLYYALL. At 62–67 the chain is on the extracellular side; the sequence is TSDLLL. The chain crosses the membrane as a helical span at residues 68-88; that stretch reads LSINSIGCLVESLYLTVYLLY. Topologically, residues 89-99 are cytoplasmic; it reads APRQAMAFTLK. A helical membrane pass occupies residues 100–120; sequence LVCAMNLALFAAVVAALQLLV. The Extracellular portion of the chain corresponds to 121–128; it reads KATDRRVT. The helical transmembrane segment at 129 to 149 threads the bilayer; the sequence is LAGGIGASFALAVFVAPLTII. One can recognise a MtN3/slv 2 domain in the interval 131 to 213; that stretch reads GGIGASFALA…VLYVVYKNPK (83 aa). Over 150–162 the chain is Cytoplasmic; that stretch reads RQVIRTKSVEFMP. Residues 163–183 traverse the membrane as a helical segment; sequence FWLSFFLTLSAVVWFFYGLLM. Residues 184–185 are Extracellular-facing; that stretch reads KD. A helical membrane pass occupies residues 186–206; sequence FFVATPNVLGLLFGLAQMVLY. Topologically, residues 207 to 300 are cytoplasmic; it reads VVYKNPKKNS…PPALPAVEVA (94 aa). Positions 256–300 are disordered; it reads ADLEAAAPATPQRPADDDAIDHRSVVVDIPPPPQPPPALPAVEVA. The span at 269–280 shows a compositional bias: basic and acidic residues; the sequence is PADDDAIDHRSV. The span at 284 to 294 shows a compositional bias: pro residues; that stretch reads IPPPPQPPPAL.

The protein belongs to the SWEET sugar transporter family. As to quaternary structure, forms homooligomers and/or heterooligomers.

It is found in the cell membrane. Functionally, mediates both low-affinity uptake and efflux of sugar across the plasma membrane. In terms of biological role, confers blight susceptibility. Confers TAL effector-mediated susceptibility to Xanthomonas oryzae pv. oryzae. The chain is Bidirectional sugar transporter SWEET12 (SWEET12) from Oryza sativa subsp. japonica (Rice).